The sequence spans 477 residues: Succinate-semialdehyde dehydrogenase [NADP(+)] (477 aa).

NADP(+) is bound by residues 142-143 (WN), 166-169 (KHSE), and 218-219 (GS). The active-site Proton acceptor is the Glu-240. NADP(+) is bound at residue Leu-241. Catalysis depends on Cys-274, which acts as the Nucleophile. Glu-371 serves as a coordination point for NADP(+).

It belongs to the aldehyde dehydrogenase family.

The catalysed reaction is succinate semialdehyde + NADP(+) + H2O = succinate + NADPH + 2 H(+). It participates in amino-acid degradation; 4-aminobutanoate degradation. Catalyzes the NADP(+) dependent oxidation of succinate semialdehyde to succinate. This is Succinate-semialdehyde dehydrogenase [NADP(+)] (ssdA) from Deinococcus radiodurans (strain ATCC 13939 / DSM 20539 / JCM 16871 / CCUG 27074 / LMG 4051 / NBRC 15346 / NCIMB 9279 / VKM B-1422 / R1).